Consider the following 215-residue polypeptide: tRNA (guanine-N(7)-)-methyltransferase (215 aa).

Residues Glu44, Glu69, Asp96, and Asp118 each contribute to the S-adenosyl-L-methionine site. The active site involves Asp118. Substrate-binding positions include Lys122, Asp154, and 192-195 (TEYE).

This sequence belongs to the class I-like SAM-binding methyltransferase superfamily. TrmB family.

The catalysed reaction is guanosine(46) in tRNA + S-adenosyl-L-methionine = N(7)-methylguanosine(46) in tRNA + S-adenosyl-L-homocysteine. Its pathway is tRNA modification; N(7)-methylguanine-tRNA biosynthesis. Its function is as follows. Catalyzes the formation of N(7)-methylguanine at position 46 (m7G46) in tRNA. The protein is tRNA (guanine-N(7)-)-methyltransferase of Levilactobacillus brevis (strain ATCC 367 / BCRC 12310 / CIP 105137 / JCM 1170 / LMG 11437 / NCIMB 947 / NCTC 947) (Lactobacillus brevis).